The chain runs to 67 residues: Large ribosomal subunit protein uL29 (67 aa).

The protein belongs to the universal ribosomal protein uL29 family.

This Gemmatimonas aurantiaca (strain DSM 14586 / JCM 11422 / NBRC 100505 / T-27) protein is Large ribosomal subunit protein uL29.